We begin with the raw amino-acid sequence, 668 residues long: DNA ligase (668 aa).

Residues 37-41 (DAIYD), 86-87 (SL), and E116 contribute to the NAD(+) site. The active-site N6-AMP-lysine intermediate is the K118. Residues R139, E176, K289, and K313 each coordinate NAD(+). Residues C407, C410, C425, and C430 each coordinate Zn(2+). The region spanning 586-668 (AQSSALAGLT…RALIETREMP (83 aa)) is the BRCT domain.

Belongs to the NAD-dependent DNA ligase family. LigA subfamily. Requires Mg(2+) as cofactor. It depends on Mn(2+) as a cofactor.

It catalyses the reaction NAD(+) + (deoxyribonucleotide)n-3'-hydroxyl + 5'-phospho-(deoxyribonucleotide)m = (deoxyribonucleotide)n+m + AMP + beta-nicotinamide D-nucleotide.. Its function is as follows. DNA ligase that catalyzes the formation of phosphodiester linkages between 5'-phosphoryl and 3'-hydroxyl groups in double-stranded DNA using NAD as a coenzyme and as the energy source for the reaction. It is essential for DNA replication and repair of damaged DNA. In Gloeobacter violaceus (strain ATCC 29082 / PCC 7421), this protein is DNA ligase.